Reading from the N-terminus, the 378-residue chain is Cytochrome b (378 aa).

Transmembrane regions (helical) follow at residues 34–54 (FGSLLGLCLIIQILTGLFLAM), 78–99 (WFLRICHANGASFFFACLFIHV), 114–134 (WMIGVIILFMVMATGFLGYVL), and 179–199 (FFTFHFILPFIVLALTMIHLL). Heme b is bound by residues His84 and His98. The heme b site is built by His183 and His197. His202 lines the a ubiquinone pocket. 4 helical membrane passes run 227–247 (YKDIVGFIIFMWILIGFIWKF), 289–309 (LGGVIALVLSIAILMILPFTH), 321–341 (LNQILFWNMVIVASLLTWIGA), and 348–368 (YVLTGQILTVLYFSYFIINPL).

The protein belongs to the cytochrome b family. The main subunits of complex b-c1 are: cytochrome b, cytochrome c1 and the Rieske protein. Heme b serves as cofactor.

It is found in the mitochondrion inner membrane. In terms of biological role, component of the ubiquinol-cytochrome c reductase complex (complex III or cytochrome b-c1 complex) that is part of the mitochondrial respiratory chain. The b-c1 complex mediates electron transfer from ubiquinol to cytochrome c. Contributes to the generation of a proton gradient across the mitochondrial membrane that is then used for ATP synthesis. This chain is Cytochrome b, found in Aedes aegypti (Yellowfever mosquito).